The following is a 301-amino-acid chain: Porphobilinogen deaminase (301 aa).

Residue Cys242 is modified to S-(dipyrrolylmethanemethyl)cysteine.

Belongs to the HMBS family. As to quaternary structure, monomer. Dipyrromethane serves as cofactor.

The catalysed reaction is 4 porphobilinogen + H2O = hydroxymethylbilane + 4 NH4(+). It functions in the pathway porphyrin-containing compound metabolism; protoporphyrin-IX biosynthesis; coproporphyrinogen-III from 5-aminolevulinate: step 2/4. Tetrapolymerization of the monopyrrole PBG into the hydroxymethylbilane pre-uroporphyrinogen in several discrete steps. In Rickettsia canadensis (strain McKiel), this protein is Porphobilinogen deaminase.